The chain runs to 649 residues: 1,4-alpha-glucan branching enzyme GlgB (649 aa).

The active-site Nucleophile is the Asp-315. The active-site Proton donor is the Glu-366.

It belongs to the glycosyl hydrolase 13 family. GlgB subfamily. As to quaternary structure, monomer.

It catalyses the reaction Transfers a segment of a (1-&gt;4)-alpha-D-glucan chain to a primary hydroxy group in a similar glucan chain.. Its pathway is glycan biosynthesis; glycogen biosynthesis. Catalyzes the formation of the alpha-1,6-glucosidic linkages in glycogen by scission of a 1,4-alpha-linked oligosaccharide from growing alpha-1,4-glucan chains and the subsequent attachment of the oligosaccharide to the alpha-1,6 position. This is 1,4-alpha-glucan branching enzyme GlgB from Ligilactobacillus salivarius (strain UCC118) (Lactobacillus salivarius).